Here is a 148-residue protein sequence, read N- to C-terminus: Arginine repressor (148 aa).

This sequence belongs to the ArgR family.

Its subcellular location is the cytoplasm. Its pathway is amino-acid biosynthesis; L-arginine biosynthesis [regulation]. Regulates arginine biosynthesis genes. This chain is Arginine repressor, found in Koribacter versatilis (strain Ellin345).